The following is a 306-amino-acid chain: RNA pseudouridylate synthase domain-containing protein 1 (306 aa).

Met-1 carries the post-translational modification N-acetylmethionine. Residue Asp-67 is part of the active site. Positions 255–290 are disordered; sequence RTDPDPDPMSGGPRPCSPSTPQPRPGRPPPETEAQR. The span at 269–285 shows a compositional bias: pro residues; sequence PCSPSTPQPRPGRPPPE.

It belongs to the pseudouridine synthase RluA family.

The chain is RNA pseudouridylate synthase domain-containing protein 1 (Rpusd1) from Mus musculus (Mouse).